A 287-amino-acid chain; its full sequence is Pyridoxal kinase PdxY (287 aa).

Residues S10 and 45-46 (TQ) each bind substrate. ATP-binding positions include D112, A144, E149, K182, and 209 to 212 (RPLV). D224 is a binding site for substrate.

Belongs to the pyridoxine kinase family. PdxY subfamily. Homodimer. The cofactor is Mg(2+).

The enzyme catalyses pyridoxal + ATP = pyridoxal 5'-phosphate + ADP + H(+). It participates in cofactor metabolism; pyridoxal 5'-phosphate salvage; pyridoxal 5'-phosphate from pyridoxal: step 1/1. Pyridoxal kinase involved in the salvage pathway of pyridoxal 5'-phosphate (PLP). Catalyzes the phosphorylation of pyridoxal to PLP. In Shigella dysenteriae serotype 1 (strain Sd197), this protein is Pyridoxal kinase PdxY.